The primary structure comprises 299 residues: Proline iminopeptidase (299 aa).

The 247-residue stretch at 26–272 folds into the AB hydrolase-1 domain; the sequence is VLLLAGGPGF…QFLYCANGSH (247 aa). The Nucleophile role is filled by Ser-103. Asp-245 is a catalytic residue. His-272 (proton donor) is an active-site residue.

It belongs to the peptidase S33 family. As to quaternary structure, monomer.

It carries out the reaction Release of N-terminal proline from a peptide.. In terms of biological role, releases the N-terminal proline from various substrates. The polypeptide is Proline iminopeptidase (Chitinophaga pinensis (strain ATCC 43595 / DSM 2588 / LMG 13176 / NBRC 15968 / NCIMB 11800 / UQM 2034)).